The sequence spans 297 residues: Magnetosome protein MamB (297 aa).

At 1–12 (MKFENCRDCREE) the chain is on the cytoplasmic side. Residues 1–214 (MKFENCRDCR…GLMDSSVDTE (214 aa)) form a transmembrane domain (TMD) region. Residues 13 to 33 (VVWWAFTADICMTLFKGILGL) traverse the membrane as a helical segment. Topologically, residues 34–83 (MSGSVALVADSLHSGADVVASGVTQLSLKISNKPADERYPFGYGNIQYIS) are lumenal. Residues 84-104 (SAIVGSLLLIGASFLMYGSVV) traverse the membrane as a helical segment. The Cytoplasmic portion of the chain corresponds to 105-112 (KLISGTYE). Residues 113 to 133 (APSIFAALGASVTVIVNELMY) form a helical membrane-spanning segment. Residues 134–164 (RYQICVGNENNSPAIIANAWDNRSDAISSAA) lie on the Lumenal side of the membrane. Residues 165–185 (VMVGVIASVIGFPIADTIAAI) traverse the membrane as a helical segment. The Cytoplasmic portion of the chain corresponds to 186-297 (GVSALVGHIG…PAPAAVTVRV (112 aa)). The C-terminal domain (CTD) stretch occupies residues 215–297 (LLQTAWQIAT…PAPAAVTVRV (83 aa)).

The protein belongs to the cation diffusion facilitator (CDF) transporter (TC 2.A.4) family. As to quaternary structure, forms homodimers via its C-terminal domain, may form higher order multimers that are sensitive to reducing agent. Probably interacts with MamE. Interacts with MamM via their C-terminal domains.

The protein localises to the cell inner membrane. It localises to the magnetosome membrane. In terms of biological role, plays a dual, essential role in magnetosome formation; required for magnetosome vesicle formation as well as biomineralization. Requires heterodimerization with MamM for stability. Probably binds and transports iron. One of 7 genes (mamLQBIEMO) able to induce magnetosome membrane biogenesis; coexpression of mamLQRBIEMO in a deletion of the 17 gene mamAB operon restores magnetosome vesicle formation but not magnetite biosynthesis. The polypeptide is Magnetosome protein MamB (Magnetospirillum gryphiswaldense (strain DSM 6361 / JCM 21280 / NBRC 15271 / MSR-1)).